Consider the following 168-residue polypeptide: Photosystem I assembly protein Ycf3 (168 aa).

TPR repeat units lie at residues 35-68 (AFTY…EIDP), 72-105 (SYIL…NPFL), and 120-153 (GEQA…TPGN).

Belongs to the Ycf3 family.

The protein resides in the plastid. Its subcellular location is the chloroplast thylakoid membrane. Its function is as follows. Essential for the assembly of the photosystem I (PSI) complex. May act as a chaperone-like factor to guide the assembly of the PSI subunits. The polypeptide is Photosystem I assembly protein Ycf3 (Populus alba (White poplar)).